The following is a 295-amino-acid chain: MEHQLLCCEVETIRRAYPDTNLLNDRVLRAMLKTEETCAPSVSYFKCVQKEIVPSMRKIVATWMLEVCEEQKCEEEVFPLAMNYLDRFLSLEPLKKSRLQLLGATCMFVASKMKETIPLTAEKLCIYTDNSIRPEELLQMELLLVNKLKWNLAAMTPHDFIEHFLSKMPEADENKQTIRKHAQTFVALCATDVKFISNPPSMVAAGSVVAAMQGLNLGSPNNFLSCYRTTHFLSRVIKCDPDCLRACQEQIEALLESSLRQAQQNVDPKATEEEGEVEEEAGLACTPTDVRDVDI.

A Cyclin N-terminal domain is found at 28-152 (LRAMLKTEET…LLVNKLKWNL (125 aa)). A disordered region spans residues 262–283 (AQQNVDPKATEEEGEVEEEAGL). Lys-269 participates in a covalent cross-link: Glycyl lysine isopeptide (Lys-Gly) (interchain with G-Cter in ubiquitin). Thr-286 carries the phosphothreonine modification.

It belongs to the cyclin family. Cyclin D subfamily. In terms of assembly, interacts with either CDK4 or CDK6 protein kinase to form a serine/threonine kinase holoenzyme complex. The cyclin subunit imparts substrate specificity to the complex. Component of the ternary complex CCND1/CDK4/CDKN1B required for nuclear translocation and modulation of CDK4-mediated kinase activity. Interacts directly with CDKN1B. Can form similar complexes with either CDKN1A or CDKN2A. Interacts with UHRF2; the interaction ubiquitinates CCND1 and appears to occur independently of phosphorylation. Interacts with USP2. Interacts (via cyclin N-terminal domain) with INSM1 (via N-terminal region); the interaction competes with the binding of CCND1 to CDK4 during cell cycle progression and inhibits CDK4 activity. Interacts with CDK4; the interaction is prevented with the binding of CCND1 to INSM1 during cell cycle progression. In terms of processing, phosphorylation at Thr-286 by MAP kinases is required for ubiquitination and degradation by the DCX(AMBRA1) complex. It also plays an essential role for recognition by the FBXO31 component of SCF (SKP1-cullin-F-box) protein ligase complex following DNA damage. Ubiquitinated at Lys-269 by the DCX(AMBRA1) complex during the transition from G1 to S cell phase, leading to its degradation: ubiquitination is dependent on Thr-286 phosphorylation. The DCX(AMBRA1) complex represents the major regulator of CCND1 stability during the G1/S transition. Also ubiquitinated by the SCF(FBXO4) and Cul7-RING(FBXW8) ubiquitin-protein ligase complexes. Following DNA damage it is ubiquitinated by the SCF(FBXO31) protein ligase complex. SCF(FBXO31) ubiquitination is dependent on Thr-286 phosphorylation. Ubiquitinated also by UHRF2 apparently in a phosphorylation-independent manner. Ubiquitination leads to its degradation and G1 arrest. Deubiquitinated by USP2; leading to its stabilization. Expressed in the intestinal epithelium.

It is found in the nucleus. Its subcellular location is the cytoplasm. It localises to the nucleus membrane. Functionally, regulatory component of the cyclin D1-CDK4 (DC) complex that phosphorylates and inhibits members of the retinoblastoma (RB) protein family including RB1 and regulates the cell-cycle during G(1)/S transition. Phosphorylation of RB1 allows dissociation of the transcription factor E2F from the RB/E2F complex and the subsequent transcription of E2F target genes which are responsible for the progression through the G(1) phase. Hypophosphorylates RB1 in early G(1) phase. Cyclin D-CDK4 complexes are major integrators of various mitogenenic and antimitogenic signals. Also a substrate for SMAD3, phosphorylating SMAD3 in a cell-cycle-dependent manner and repressing its transcriptional activity. Component of the ternary complex, cyclin D1/CDK4/CDKN1B, required for nuclear translocation and activity of the cyclin D-CDK4 complex. Exhibits transcriptional corepressor activity with INSM1 on the NEUROD1 and INS promoters in a cell cycle-independent manner. In Mus musculus (Mouse), this protein is G1/S-specific cyclin-D1 (Ccnd1).